The chain runs to 128 residues: Holo-[acyl-carrier-protein] synthase (128 aa).

Mg(2+)-binding residues include Asp-9 and Glu-60.

The protein belongs to the P-Pant transferase superfamily. AcpS family. Mg(2+) serves as cofactor.

It localises to the cytoplasm. The enzyme catalyses apo-[ACP] + CoA = holo-[ACP] + adenosine 3',5'-bisphosphate + H(+). Its function is as follows. Transfers the 4'-phosphopantetheine moiety from coenzyme A to a Ser of acyl-carrier-protein. The chain is Holo-[acyl-carrier-protein] synthase from Buchnera aphidicola subsp. Baizongia pistaciae (strain Bp).